A 553-amino-acid chain; its full sequence is Urocanate hydratase (553 aa).

NAD(+) is bound by residues 45 to 46, Q123, 169 to 171, D189, R194, 235 to 236, 256 to 260, 266 to 267, Y315, and G485; these read GG, GMG, NA, QTSAH, and YV.

It belongs to the urocanase family. Requires NAD(+) as cofactor.

It is found in the cytoplasm. It carries out the reaction 4-imidazolone-5-propanoate = trans-urocanate + H2O. It participates in amino-acid degradation; L-histidine degradation into L-glutamate; N-formimidoyl-L-glutamate from L-histidine: step 2/3. Functionally, catalyzes the conversion of urocanate to 4-imidazolone-5-propionate. This chain is Urocanate hydratase, found in Staphylococcus aureus (strain Mu50 / ATCC 700699).